A 241-amino-acid polypeptide reads, in one-letter code: Ribulose-phosphate 3-epimerase 1 (241 aa).

Serine 21 contacts substrate. The a divalent metal cation site is built by histidine 46, aspartate 48, and histidine 79. Aspartate 48 (proton acceptor) is an active-site residue. Residues histidine 79, 155–158 (GFGG), 192–194 (DGG), and 214–215 (GS) each bind substrate. Aspartate 192 is a binding site for a divalent metal cation. Aspartate 192 serves as the catalytic Proton donor.

This sequence belongs to the ribulose-phosphate 3-epimerase family. The cofactor is a divalent metal cation.

It catalyses the reaction D-ribulose 5-phosphate = D-xylulose 5-phosphate. It participates in carbohydrate degradation. Catalyzes the reversible epimerization of D-ribulose 5-phosphate to D-xylulose 5-phosphate. This chain is Ribulose-phosphate 3-epimerase 1, found in Cupriavidus necator (strain ATCC 17699 / DSM 428 / KCTC 22496 / NCIMB 10442 / H16 / Stanier 337) (Ralstonia eutropha).